A 219-amino-acid polypeptide reads, in one-letter code: Vesicle-associated membrane protein 712 (219 aa).

The Cytoplasmic portion of the chain corresponds to 1 to 189 (MSILYALVAR…NNTVWWRNCK (189 aa)). In terms of domain architecture, Longin spans 7 to 111 (LVARGTVVLA…AMNDEFSRVL (105 aa)). The v-SNARE coiled-coil homology domain occupies 126 to 186 (TISRIKGEMN…RRFNNTVWWR (61 aa)). Residues 190 to 210 (LTLLLILVLLVIIYIGVAFAC) form a helical; Anchor for type IV membrane protein membrane-spanning segment. The Vesicular portion of the chain corresponds to 211-219 (HGPTLPSCV).

It belongs to the synaptobrevin family. As to expression, expressed in flowers, leaves, stems and roots.

It is found in the vacuole membrane. The protein resides in the prevacuolar compartment membrane. In terms of biological role, involved in the targeting and/or fusion of transport vesicles to their target membrane. This is Vesicle-associated membrane protein 712 from Arabidopsis thaliana (Mouse-ear cress).